The sequence spans 230 residues: Ribose-5-phosphate isomerase A (230 aa).

Substrate-binding positions include 29–32, 86–89, and 99–102; these read SGST, DGAD, and KGGG. The Proton acceptor role is filled by glutamate 108. Lysine 126 contributes to the substrate binding site.

It belongs to the ribose 5-phosphate isomerase family. Homodimer.

The enzyme catalyses aldehydo-D-ribose 5-phosphate = D-ribulose 5-phosphate. It participates in carbohydrate degradation; pentose phosphate pathway; D-ribose 5-phosphate from D-ribulose 5-phosphate (non-oxidative stage): step 1/1. Catalyzes the reversible conversion of ribose-5-phosphate to ribulose 5-phosphate. This is Ribose-5-phosphate isomerase A from Desulfatibacillum aliphaticivorans.